The following is a 42-amino-acid chain: Snaclec lebecetin subunit alpha (42 aa).

Residues 1-42 (DQDCLPGWSSHEGHCYKVFNLDKTWEDAEKFCTEQPSNGHLV) enclose the C-type lectin domain. The cysteines at positions 4 and 15 are disulfide-linked.

In terms of assembly, heterodimer of subunits alpha and beta; disulfide-linked. Ca(2+) serves as cofactor. Glycosylated. As to expression, expressed by the venom gland.

It localises to the secreted. Binds to the platelet GPIb/IX/V receptor system and inhibits ristocetin-induced platelet aggregation in human platelet-rich plasma. Strongly inhibits platelet aggregation induced by ADP, calcium ionophore, thrombin and collagen. Does not inhibit U46619-induced platelet aggregation. The sequence is that of Snaclec lebecetin subunit alpha from Macrovipera lebetinus (Levantine viper).